Consider the following 519-residue polypeptide: Dihydropyrimidinase (519 aa).

Residues H67 and H69 each contribute to the Zn(2+) site. Position 79 is a phosphoserine (S79). Residue K159 participates in Zn(2+) binding. K159 carries the post-translational modification N6-carboxylysine. Residue Y164 coordinates substrate. Positions 192 and 248 each coordinate Zn(2+). Residue K256 is modified to N6-succinyllysine. Position 326 (D326) interacts with Zn(2+). N347 is a binding site for substrate. Residue T510 is modified to Phosphothreonine.

This sequence belongs to the metallo-dependent hydrolases superfamily. Hydantoinase/dihydropyrimidinase family. Homotetramer. It depends on Zn(2+) as a cofactor. Post-translationally, carboxylation allows a single lysine to coordinate two zinc ions.

It catalyses the reaction 5,6-dihydrouracil + H2O = 3-(carbamoylamino)propanoate + H(+). Functionally, catalyzes the second step of the reductive pyrimidine degradation, the reversible hydrolytic ring opening of dihydropyrimidines. Can catalyze the ring opening of 5,6-dihydrouracil to N-carbamyl-alanine and of 5,6-dihydrothymine to N-carbamyl-amino isobutyrate. The sequence is that of Dihydropyrimidinase (Dpys) from Rattus norvegicus (Rat).